The primary structure comprises 149 residues: MYTQGAFVIVLNESQQILLVKRKDVPLWDLPGGRVDPGESAEEAAVREILEETGYNAALSAKIGVYQRPKFQDEQHLFFGSITGGQAMADGTETAGLKWVSPGRLPLFMVPNRKRQINDFKNGAQDVNVTVKDSGLLAAIDLLKRRLGK.

In terms of domain architecture, Nudix hydrolase spans methionine 1–glycine 123. A Nudix box motif is present at residues glycine 33–glycine 54. Mg(2+) is bound by residues glutamate 48 and glutamate 52.

It belongs to the Nudix hydrolase family. Mg(2+) serves as cofactor. The cofactor is Mn(2+).

The enzyme catalyses 8-oxo-dGTP + H2O = 8-oxo-dGMP + diphosphate + H(+). In terms of biological role, may be involved in the GO system responsible for removing an oxidatively damaged form of guanine (7,8-dihydro-8-oxoguanine, 8-oxo-dGTP) from DNA and the nucleotide pool. 8-oxo-dGTP is inserted opposite dA and dC residues of template DNA with almost equal efficiency thus leading to A.T to G.C transversions. MutT specifically degrades 8-oxo-dGTP to the monophosphate. Functions, in conjunction with ytkD, to protect vegetatively growing cells from DNA-damaging agents such as H(2)O(2) or t-BHP (t-butylhydroperoxide). The 2 proteins do not however protect spores. In Bacillus subtilis (strain 168), this protein is Putative 8-oxo-dGTP diphosphatase (mutT).